Here is a 136-residue protein sequence, read N- to C-terminus: Inner membrane protein YbhQ (136 aa).

Topologically, residues 1–12 (MKWQQRVRVATG) are cytoplasmic. A helical membrane pass occupies residues 13–33 (LSCWQIMLHLLVVALLVVGWM). Topologically, residues 34-37 (SKTL) are periplasmic. A helical transmembrane segment spans residues 38 to 58 (VHVGVGLCALYCVTVVMMLVF). The Cytoplasmic segment spans residues 59 to 71 (QRHPEQRWREVAD). The helical transmembrane segment at 72–92 (VLEELTTTWYFGAALIVLWLL) threads the bilayer. Residues 93–99 (SRVLENN) lie on the Periplasmic side of the membrane. A helical membrane pass occupies residues 100–120 (FLLAIAGLAILAGPAVVSLLA). The Cytoplasmic portion of the chain corresponds to 121–136 (KDKKLHHLTSKHRVRR).

It is found in the cell inner membrane. This is Inner membrane protein YbhQ (ybhQ) from Escherichia coli O157:H7.